Consider the following 170-residue polypeptide: Crossover junction endodeoxyribonuclease RuvC (170 aa).

Active-site residues include D11, E71, and D143. Residues D11, E71, and D143 each contribute to the Mg(2+) site.

This sequence belongs to the RuvC family. In terms of assembly, homodimer which binds Holliday junction (HJ) DNA. The HJ becomes 2-fold symmetrical on binding to RuvC with unstacked arms; it has a different conformation from HJ DNA in complex with RuvA. In the full resolvosome a probable DNA-RuvA(4)-RuvB(12)-RuvC(2) complex forms which resolves the HJ. Mg(2+) serves as cofactor.

The protein resides in the cytoplasm. The enzyme catalyses Endonucleolytic cleavage at a junction such as a reciprocal single-stranded crossover between two homologous DNA duplexes (Holliday junction).. Functionally, the RuvA-RuvB-RuvC complex processes Holliday junction (HJ) DNA during genetic recombination and DNA repair. Endonuclease that resolves HJ intermediates. Cleaves cruciform DNA by making single-stranded nicks across the HJ at symmetrical positions within the homologous arms, yielding a 5'-phosphate and a 3'-hydroxyl group; requires a central core of homology in the junction. The consensus cleavage sequence is 5'-(A/T)TT(C/G)-3'. Cleavage occurs on the 3'-side of the TT dinucleotide at the point of strand exchange. HJ branch migration catalyzed by RuvA-RuvB allows RuvC to scan DNA until it finds its consensus sequence, where it cleaves and resolves the cruciform DNA. The sequence is that of Crossover junction endodeoxyribonuclease RuvC from Rhizobium rhizogenes (strain K84 / ATCC BAA-868) (Agrobacterium radiobacter).